We begin with the raw amino-acid sequence, 278 residues long: Secoisolariciresinol dehydrogenase (278 aa).

Residues 23 to 28 (GGAGGI), aspartate 47, valine 73, and asparagine 99 contribute to the NAD(+) site. Residues serine 104 and serine 164 each contribute to the substrate site. Catalysis depends on tyrosine 167, which acts as the Proton donor/acceptor. Positions 171 and 200 each coordinate NAD(+).

The protein belongs to the short-chain dehydrogenases/reductases (SDR) family. Homotetramer.

It catalyses the reaction (-)-secoisolariciresinol + 2 NAD(+) = (-)-matairesinol + 2 NADH + 2 H(+). Oxidoreductase involved in lignan biosynthesis. Catalyzes the stereospecific conversion of (-)-secoisolariciresinol to (-)-matairesinol via a lactol intermediate. This is Secoisolariciresinol dehydrogenase from Podophyllum peltatum (American mandrake).